Consider the following 272-residue polypeptide: Nitrogenase iron protein (272 aa).

8–15 (GKGGIGKS) lines the ATP pocket. Cys-94 lines the [4Fe-4S] cluster pocket. The residue at position 97 (Arg-97) is an ADP-ribosylarginine; by dinitrogenase reductase ADP-ribosyltransferase. Residue Cys-129 coordinates [4Fe-4S] cluster.

Belongs to the NifH/BchL/ChlL family. As to quaternary structure, homodimer. The cofactor is [4Fe-4S] cluster. Post-translationally, the reversible ADP-ribosylation of Arg-97 inactivates the nitrogenase reductase and regulates nitrogenase activity.

The enzyme catalyses N2 + 8 reduced [2Fe-2S]-[ferredoxin] + 16 ATP + 16 H2O = H2 + 8 oxidized [2Fe-2S]-[ferredoxin] + 2 NH4(+) + 16 ADP + 16 phosphate + 6 H(+). Functionally, the key enzymatic reactions in nitrogen fixation are catalyzed by the nitrogenase complex, which has 2 components: the iron protein and the molybdenum-iron protein. This is Nitrogenase iron protein from Clostridium acetobutylicum (strain ATCC 824 / DSM 792 / JCM 1419 / IAM 19013 / LMG 5710 / NBRC 13948 / NRRL B-527 / VKM B-1787 / 2291 / W).